Consider the following 533-residue polypeptide: CTP synthase (533 aa).

The segment at 1 to 265 (MTKFIFVTGG…PAYLARRLGL (265 aa)) is amidoligase domain. Ser13 contacts CTP. Ser13 contacts UTP. Residue 14–19 (GLGKGI) coordinates ATP. Residue Tyr54 coordinates L-glutamine. ATP is bound at residue Asp71. Asp71 and Glu139 together coordinate Mg(2+). Residues 146–148 (DIE), 186–191 (KTKPTQ), and Lys222 contribute to the CTP site. Residues 186–191 (KTKPTQ) and Lys222 contribute to the UTP site. A Glutamine amidotransferase type-1 domain is found at 290-532 (EIAIVGKYVK…VEAAKKKKYG (243 aa)). Gly351 contacts L-glutamine. The Nucleophile; for glutamine hydrolysis role is filled by Cys378. Residues 379-382 (FGFQ), Glu402, and Arg459 contribute to the L-glutamine site. Active-site residues include His505 and Glu507.

It belongs to the CTP synthase family. In terms of assembly, homotetramer.

The enzyme catalyses UTP + L-glutamine + ATP + H2O = CTP + L-glutamate + ADP + phosphate + 2 H(+). It catalyses the reaction L-glutamine + H2O = L-glutamate + NH4(+). It carries out the reaction UTP + NH4(+) + ATP = CTP + ADP + phosphate + 2 H(+). It participates in pyrimidine metabolism; CTP biosynthesis via de novo pathway; CTP from UDP: step 2/2. With respect to regulation, allosterically activated by GTP, when glutamine is the substrate; GTP has no effect on the reaction when ammonia is the substrate. The allosteric effector GTP functions by stabilizing the protein conformation that binds the tetrahedral intermediate(s) formed during glutamine hydrolysis. Inhibited by the product CTP, via allosteric rather than competitive inhibition. In terms of biological role, catalyzes the ATP-dependent amination of UTP to CTP with either L-glutamine or ammonia as the source of nitrogen. Regulates intracellular CTP levels through interactions with the four ribonucleotide triphosphates. The polypeptide is CTP synthase (Thermococcus kodakarensis (strain ATCC BAA-918 / JCM 12380 / KOD1) (Pyrococcus kodakaraensis (strain KOD1))).